We begin with the raw amino-acid sequence, 301 residues long: Probable alpha-L-glutamate ligase 1 (301 aa).

The ATP-grasp domain occupies 104-287 (MQLMSRRGIG…VAGAIIDFVE (184 aa)). Residues Lys-141, 178–179 (EY), Asp-187, and 211–213 (RSN) contribute to the ATP site. 3 residues coordinate Mg(2+): Asp-248, Glu-260, and Asn-262. Mn(2+)-binding residues include Asp-248, Glu-260, and Asn-262.

This sequence belongs to the RimK family. The cofactor is Mg(2+). Mn(2+) serves as cofactor.

This chain is Probable alpha-L-glutamate ligase 1, found in Shewanella baltica (strain OS185).